The chain runs to 593 residues: Solute carrier family 40 member 3, chloroplastic (593 aa).

A disordered region spans residues 1–23; that stretch reads MSMSKLLSPPPTSPPGPALSRLP. A chloroplast-targeting transit peptide spans 1-51; it reads MSMSKLLSPPPTSPPGPALSRLPCRRVAPPPVLPFPFPLRRLTSRRVFATS. The segment covering 8–17 has biased composition (pro residues); that stretch reads SPPPTSPPGP. 11 consecutive transmembrane segments (helical) span residues 181 to 201, 219 to 239, 253 to 273, 303 to 322, 323 to 343, 403 to 423, 431 to 451, 462 to 482, 493 to 513, 530 to 550, and 557 to 577; these read ILPV…AGPL, AAIQ…AFAV, FAVL…LGII, LLCE…KNNP, LTCI…LIFL, YVFV…TFLI, VIGA…FATA, AGAA…VVYL, LFAF…YSAI, IGAT…AVAV, and HFGA…GMYC.

It belongs to the ferroportin (FP) (TC 2.A.100) family. SLC40A subfamily.

Its subcellular location is the membrane. The protein localises to the plastid. It is found in the chloroplast envelope. In terms of biological role, may be involved in iron transport and iron homeostasis. This Oryza sativa subsp. japonica (Rice) protein is Solute carrier family 40 member 3, chloroplastic.